Reading from the N-terminus, the 354-residue chain is Uroporphyrinogen decarboxylase (354 aa).

Substrate is bound by residues 27 to 31 (RQAGR), Asp77, Tyr154, Thr209, and His327.

The protein belongs to the uroporphyrinogen decarboxylase family. Homodimer.

The protein resides in the cytoplasm. The catalysed reaction is uroporphyrinogen III + 4 H(+) = coproporphyrinogen III + 4 CO2. It functions in the pathway porphyrin-containing compound metabolism; protoporphyrin-IX biosynthesis; coproporphyrinogen-III from 5-aminolevulinate: step 4/4. Catalyzes the decarboxylation of four acetate groups of uroporphyrinogen-III to yield coproporphyrinogen-III. The polypeptide is Uroporphyrinogen decarboxylase (Pseudomonas putida (strain GB-1)).